The primary structure comprises 76 residues: Cytochrome c oxidase subunit 6C-2 (76 aa).

Residues 4 to 14 lie on the Mitochondrial matrix side of the membrane; the sequence is GALLPKPQMRG. Residues 15–55 traverse the membrane as a helical segment; it reads LLAKRLRVHIVGAFVVALGVAAAYKFGVAEPRKKAYADFYR. Residues 56–76 are Mitochondrial intermembrane-facing; sequence NYDSMKDFEEMRQAGVFQSAK. Residue Ser74 is modified to Phosphoserine.

Belongs to the cytochrome c oxidase subunit 6c family. As to quaternary structure, component of the cytochrome c oxidase (complex IV, CIV), a multisubunit enzyme composed of 14 subunits. The complex is composed of a catalytic core of 3 subunits MT-CO1, MT-CO2 and MT-CO3, encoded in the mitochondrial DNA, and 11 supernumerary subunits COX4I, COX5A, COX5B, COX6A, COX6B, COX6C, COX7A, COX7B, COX7C, COX8 and NDUFA4, which are encoded in the nuclear genome. The complex exists as a monomer or a dimer and forms supercomplexes (SCs) in the inner mitochondrial membrane with NADH-ubiquinone oxidoreductase (complex I, CI) and ubiquinol-cytochrome c oxidoreductase (cytochrome b-c1 complex, complex III, CIII), resulting in different assemblies (supercomplex SCI(1)III(2)IV(1) and megacomplex MCI(2)III(2)IV(2)).

It is found in the mitochondrion inner membrane. Its pathway is energy metabolism; oxidative phosphorylation. Component of the cytochrome c oxidase, the last enzyme in the mitochondrial electron transport chain which drives oxidative phosphorylation. The respiratory chain contains 3 multisubunit complexes succinate dehydrogenase (complex II, CII), ubiquinol-cytochrome c oxidoreductase (cytochrome b-c1 complex, complex III, CIII) and cytochrome c oxidase (complex IV, CIV), that cooperate to transfer electrons derived from NADH and succinate to molecular oxygen, creating an electrochemical gradient over the inner membrane that drives transmembrane transport and the ATP synthase. Cytochrome c oxidase is the component of the respiratory chain that catalyzes the reduction of oxygen to water. Electrons originating from reduced cytochrome c in the intermembrane space (IMS) are transferred via the dinuclear copper A center (CU(A)) of subunit 2 and heme A of subunit 1 to the active site in subunit 1, a binuclear center (BNC) formed by heme A3 and copper B (CU(B)). The BNC reduces molecular oxygen to 2 water molecules using 4 electrons from cytochrome c in the IMS and 4 protons from the mitochondrial matrix. The sequence is that of Cytochrome c oxidase subunit 6C-2 (Cox6c2) from Rattus norvegicus (Rat).